A 271-amino-acid chain; its full sequence is MGNTTSERVSGERHGAKAARAEGGGHGPGKEHKIMVGSTDDPSVFSLPDSKLPGDKEFVPWQQDLDDSVKPAQQARPTVIRWSEGGKEVFISGSFNNWSTKIPLIKSHNDFVAILDLPEGEHQYKFFVDGQWVHDPSEPVVTSQLGTINNLIHVKKSDFEVFDALKLDSMESSETSCRDLSSSPPGPYGQEMYVFRSEERFKSPPILPPHLLQVILNKDTNISCDPALLPEPNHVMLNHLYALSIKDSVMVLSATHRYKKKYVTTLLYKPI.

Residues 1-46 (MGNTTSERVSGERHGAKAARAEGGGHGPGKEHKIMVGSTDDPSVFS) are disordered. Residue S38 is modified to Phosphoserine; by ULK1. T39 bears the Phosphothreonine; by ULK1 mark. S68 is modified (phosphoserine; by ULK1). Phosphoserine occurs at positions 94 and 107. Phosphothreonine is present on T147. Residues S157, S169, S173, and S183 each carry the phosphoserine modification.

Belongs to the 5'-AMP-activated protein kinase beta subunit family. AMPK is a heterotrimer of an alpha catalytic subunit (PRKAA1 or PRKAA2), a beta (PRKAB1 or PRKAB2) and a gamma non-catalytic subunits (PRKAG1, PRKAG2 or PRKAG3). In terms of processing, phosphorylated when associated with the catalytic subunit (PRKAA1 or PRKAA2). Phosphorylated by ULK1 and ULK2; leading to negatively regulate AMPK activity and suggesting the existence of a regulatory feedback loop between ULK1, ULK2 and AMPK.

Non-catalytic subunit of AMP-activated protein kinase (AMPK), an energy sensor protein kinase that plays a key role in regulating cellular energy metabolism. In response to reduction of intracellular ATP levels, AMPK activates energy-producing pathways and inhibits energy-consuming processes: inhibits protein, carbohydrate and lipid biosynthesis, as well as cell growth and proliferation. AMPK acts via direct phosphorylation of metabolic enzymes, and by longer-term effects via phosphorylation of transcription regulators. Also acts as a regulator of cellular polarity by remodeling the actin cytoskeleton; probably by indirectly activating myosin. Beta non-catalytic subunit acts as a scaffold on which the AMPK complex assembles, via its C-terminus that bridges alpha (PRKAA1 or PRKAA2) and gamma subunits (PRKAG1, PRKAG2 or PRKAG3). This chain is 5'-AMP-activated protein kinase subunit beta-2 (Prkab2), found in Mus musculus (Mouse).